The sequence spans 350 residues: uncharacterized protein (350 aa).

The disordered stretch occupies residues 330-350 (RHPGDLRSEPHYRPSAKLAEF). Positions 331-341 (HPGDLRSEPHY) are enriched in basic and acidic residues.

This is an uncharacterized protein from Mycobacterium tuberculosis.